Here is a 141-residue protein sequence, read N- to C-terminus: Large ribosomal subunit protein uL11 (141 aa).

It belongs to the universal ribosomal protein uL11 family. As to quaternary structure, part of the ribosomal stalk of the 50S ribosomal subunit. Interacts with L10 and the large rRNA to form the base of the stalk. L10 forms an elongated spine to which L12 dimers bind in a sequential fashion forming a multimeric L10(L12)X complex. In terms of processing, one or more lysine residues are methylated.

Its function is as follows. Forms part of the ribosomal stalk which helps the ribosome interact with GTP-bound translation factors. The sequence is that of Large ribosomal subunit protein uL11 from Clostridium acetobutylicum (strain ATCC 824 / DSM 792 / JCM 1419 / IAM 19013 / LMG 5710 / NBRC 13948 / NRRL B-527 / VKM B-1787 / 2291 / W).